The primary structure comprises 187 residues: Protein GrpE (187 aa).

Residues 1-30 (MEKKETKSESEKTNKQDNKNTKSQKKENLN) form a disordered region.

It belongs to the GrpE family. In terms of assembly, homodimer.

It is found in the cytoplasm. Participates actively in the response to hyperosmotic and heat shock by preventing the aggregation of stress-denatured proteins, in association with DnaK and GrpE. It is the nucleotide exchange factor for DnaK and may function as a thermosensor. Unfolded proteins bind initially to DnaJ; upon interaction with the DnaJ-bound protein, DnaK hydrolyzes its bound ATP, resulting in the formation of a stable complex. GrpE releases ADP from DnaK; ATP binding to DnaK triggers the release of the substrate protein, thus completing the reaction cycle. Several rounds of ATP-dependent interactions between DnaJ, DnaK and GrpE are required for fully efficient folding. The polypeptide is Protein GrpE (Borreliella burgdorferi (strain ATCC 35210 / DSM 4680 / CIP 102532 / B31) (Borrelia burgdorferi)).